We begin with the raw amino-acid sequence, 489 residues long: Protein K15 (489 aa).

Residues 1-26 (MKTLIFFWNLWLWALLVCFWCITLVC) form the signal peptide. A run of 11 helical transmembrane segments spans residues 29–49 (TNSIDTMASLLVMCILFVSAI), 63–83 (WPSSWHLGIIACIVLKLWNLS), 89–109 (TYACLITTAILSLVTAFLTLI), 121–141 (HGILFTSTFAVLMTNMLVHMS), 148–168 (WIFFPISFTLSLPFLYAFATV), 175–195 (LVSSVSFICAGLVMGYPVSCC), 200–220 (CTATAAGLSLSSIYLGFTGII), 237–257 (FLLLQGGVLTTQTLTTELLAI), 264–284 (IKGHEILLLVCLIFLWCLYVW), 296–316 (MLHLIAAWSHTGGCVQLVMLL), and 324–344 (ILTMIICISTLFSTLQGLLVF).

As to quaternary structure, interacts with host LYN; this interaction modulates B-cells signaling. Interacts with host ITSN2.

The protein localises to the host cell membrane. Its subcellular location is the host Golgi apparatus. It is found in the host trans-Golgi network. Functionally, plays a crucial role for reactivation of the virus from latency, early viral gene expression and virus production. Modulates host signaling pathways including activation of MAP kinases c-JUN-N-terminal kinase (JNK), ERK2, and NF-kappa-B resulting in the activation of AP-1 and NFAT-dependent gene expression in B-lymphocytes. When expressed in epithelial cells, induces the expression of several inflammatory and angiogenic genes. Also interferes with B-lymphocytes signaling through interaction with host LYN kinase. The polypeptide is Protein K15 (K15) (Human herpesvirus 8 type P (isolate GK18) (HHV-8)).